The chain runs to 328 residues: Phenylalanine--tRNA ligase alpha subunit (328 aa).

Glutamate 253 contacts Mg(2+).

This sequence belongs to the class-II aminoacyl-tRNA synthetase family. Phe-tRNA synthetase alpha subunit type 1 subfamily. Tetramer of two alpha and two beta subunits. Mg(2+) is required as a cofactor.

It is found in the cytoplasm. It carries out the reaction tRNA(Phe) + L-phenylalanine + ATP = L-phenylalanyl-tRNA(Phe) + AMP + diphosphate + H(+). The polypeptide is Phenylalanine--tRNA ligase alpha subunit (Coxiella burnetii (strain Dugway 5J108-111)).